We begin with the raw amino-acid sequence, 491 residues long: Probable glycine dehydrogenase (decarboxylating) subunit 2 (491 aa).

Position 273 is an N6-(pyridoxal phosphate)lysine (lysine 273).

The protein belongs to the GcvP family. C-terminal subunit subfamily. In terms of assembly, the glycine cleavage system is composed of four proteins: P, T, L and H. In this organism, the P 'protein' is a heterodimer of two subunits. The cofactor is pyridoxal 5'-phosphate.

It carries out the reaction N(6)-[(R)-lipoyl]-L-lysyl-[glycine-cleavage complex H protein] + glycine + H(+) = N(6)-[(R)-S(8)-aminomethyldihydrolipoyl]-L-lysyl-[glycine-cleavage complex H protein] + CO2. In terms of biological role, the glycine cleavage system catalyzes the degradation of glycine. The P protein binds the alpha-amino group of glycine through its pyridoxal phosphate cofactor; CO(2) is released and the remaining methylamine moiety is then transferred to the lipoamide cofactor of the H protein. The chain is Probable glycine dehydrogenase (decarboxylating) subunit 2 from Bacillus cereus (strain G9842).